A 219-amino-acid chain; its full sequence is ATP-dependent dethiobiotin synthetase BioD (219 aa).

Glu-12–Tyr-17 is an ATP binding site. Thr-16 serves as a coordination point for Mg(2+). Residue Lys-37 is part of the active site. Substrate is bound at residue Ser-41. ATP is bound by residues Asp-52, Glu-114–Gly-117, and Asn-174–Cys-175. Residues Asp-52 and Glu-114 each coordinate Mg(2+).

This sequence belongs to the dethiobiotin synthetase family. Homodimer. It depends on Mg(2+) as a cofactor.

It is found in the cytoplasm. It carries out the reaction (7R,8S)-7,8-diammoniononanoate + CO2 + ATP = (4R,5S)-dethiobiotin + ADP + phosphate + 3 H(+). The protein operates within cofactor biosynthesis; biotin biosynthesis; biotin from 7,8-diaminononanoate: step 1/2. In terms of biological role, catalyzes a mechanistically unusual reaction, the ATP-dependent insertion of CO2 between the N7 and N8 nitrogen atoms of 7,8-diaminopelargonic acid (DAPA, also called 7,8-diammoniononanoate) to form a ureido ring. The polypeptide is ATP-dependent dethiobiotin synthetase BioD (Francisella tularensis subsp. holarctica (strain FTNF002-00 / FTA)).